Consider the following 48-residue polypeptide: AACKCDDEGPDIRTAPLTGTVDLGSCNAGWEKCASYYTIIADCCRKKK.

Cystine bridges form between C3/C43, C5/C33, and C26/C44.

The protein belongs to the sea anemone sodium channel inhibitory toxin family. Type II subfamily.

The protein resides in the secreted. It is found in the nematocyst. Binds specifically to voltage-gated sodium channels (Nav), thereby delaying their inactivation during signal transduction. Is highly toxic to crabs (by intrahemocoelic injection), but without effect upon mice (by intraperitoneal injection). This Stichodactyla helianthus (Sun anemone) protein is Delta-stichotoxin-She1a.